Consider the following 404-residue polypeptide: Coenzyme F(430) synthetase (404 aa).

Residue 112-117 (GVKGKT) participates in ATP binding.

Belongs to the MurCDEF family.

It carries out the reaction 15,17(3)-seco-F430-17(3)-acid + ATP = coenzyme F430 + ADP + phosphate. Involved in the biosynthesis of the unique nickel-containing tetrapyrrole coenzyme F430, the prosthetic group of methyl-coenzyme M reductase (MCR), which plays a key role in methanogenesis and anaerobic methane oxidation. Catalyzes the activation the g-propionate side chain of 15,17(3)-seco-F430-17(3)-acid (seco-F430) for intramolecular C-C bond formation to yield the carbocyclic F ring of coenzyme F430. This chain is Coenzyme F(430) synthetase, found in Methanocaldococcus jannaschii (strain ATCC 43067 / DSM 2661 / JAL-1 / JCM 10045 / NBRC 100440) (Methanococcus jannaschii).